A 374-amino-acid polypeptide reads, in one-letter code: Chaperone protein DnaJ (374 aa).

Residues 5-70 (DYYKLLGVDR…EKRAGYDRYG (66 aa)) enclose the J domain. The CR-type zinc finger occupies 136–214 (GIQAPIHYVT…CNGSGRRRDE (79 aa)). C149, C152, C166, C169, C188, C191, C202, and C205 together coordinate Zn(2+). 4 CXXCXGXG motif repeats span residues 149-156 (CDMCQGRG), 166-173 (CHTCQGSG), 188-195 (CTTCYGEG), and 202-209 (CKKCNGSG).

The protein belongs to the DnaJ family. Homodimer. Zn(2+) is required as a cofactor.

The protein localises to the cytoplasm. Participates actively in the response to hyperosmotic and heat shock by preventing the aggregation of stress-denatured proteins and by disaggregating proteins, also in an autonomous, DnaK-independent fashion. Unfolded proteins bind initially to DnaJ; upon interaction with the DnaJ-bound protein, DnaK hydrolyzes its bound ATP, resulting in the formation of a stable complex. GrpE releases ADP from DnaK; ATP binding to DnaK triggers the release of the substrate protein, thus completing the reaction cycle. Several rounds of ATP-dependent interactions between DnaJ, DnaK and GrpE are required for fully efficient folding. Also involved, together with DnaK and GrpE, in the DNA replication of plasmids through activation of initiation proteins. This Wolbachia sp. subsp. Brugia malayi (strain TRS) protein is Chaperone protein DnaJ.